The sequence spans 530 residues: Negative elongation factor A (530 aa).

Positions tryptophan 89 to leucine 248 constitute an HDAg domain. An NELF-C/D-binding region spans residues arginine 125–glutamine 188. Residue threonine 157 is modified to Phosphothreonine. An RNAPII-binding region spans residues leucine 189–leucine 248. Disordered stretches follow at residues proline 213–leucine 248, glycine 266–alanine 296, and serine 312–threonine 409. 2 positions are modified to phosphoserine: serine 225 and serine 233. Positions serine 225–arginine 238 are enriched in polar residues. Position 277 is a phosphothreonine (threonine 277). The span at threonine 277 to threonine 291 shows a compositional bias: basic and acidic residues. A compositionally biased stretch (low complexity) spans serine 315–serine 341. Serine 363 bears the Phosphoserine mark.

This sequence belongs to the NELF-A family. In terms of assembly, the NELF complex is composed of NELFA, NELFB, NELFCD and NELFE; NELFA and NELFCD form a stable subcomplex that binds to the N-terminus of NELFB. In vitro, the NELFA:NELFCD subcomplex binds to ssDNA and ssRNA in a sequence- and structure-dependent manner. Interacts with the RNA polymerase II complex when it is not phosphorylated by P-TEFb. Interacts with NELFB. In terms of tissue distribution, ubiquitous. Expressed in brain, heart, spleen, lung, liver, muscle, kidney and testis. Already expressed in 7 dpc embryos.

It localises to the nucleus. In terms of biological role, essential component of the NELF complex, a complex that negatively regulates the elongation of transcription by RNA polymerase II. The NELF complex, which acts via an association with the DSIF complex and causes transcriptional pausing, is counteracted by the P-TEFb kinase complex. The protein is Negative elongation factor A (Nelfa) of Mus musculus (Mouse).